The chain runs to 99 residues: Malonate decarboxylase acyl carrier protein (99 aa).

Serine 25 carries the O-(phosphoribosyl dephospho-coenzyme A)serine modification.

In terms of processing, covalently binds the prosthetic group of malonate decarboxylase.

Its subcellular location is the cytoplasm. In terms of biological role, subunit of malonate decarboxylase, it is an acyl carrier protein to which acetyl and malonyl thioester residues are bound via a 2'-(5''-phosphoribosyl)-3'-dephospho-CoA prosthetic group and turn over during the catalytic mechanism. The protein is Malonate decarboxylase acyl carrier protein (mdcC) of Klebsiella pneumoniae.